Reading from the N-terminus, the 249-residue chain is Uridylate kinase (249 aa).

ATP is bound at residue 15–18; the sequence is KLSG. The segment at 23–28 is involved in allosteric activation by GTP; that stretch reads GDEGFG. UMP is bound at residue Gly57. ATP-binding residues include Gly58 and Arg62. Residues Asp77 and 138–145 contribute to the UMP site; that span reads TGNPFFTT. 3 residues coordinate ATP: Thr165, Tyr171, and Asp174.

It belongs to the UMP kinase family. Homohexamer.

Its subcellular location is the cytoplasm. It catalyses the reaction UMP + ATP = UDP + ADP. Its pathway is pyrimidine metabolism; CTP biosynthesis via de novo pathway; UDP from UMP (UMPK route): step 1/1. With respect to regulation, allosterically activated by GTP. Inhibited by UTP. Its function is as follows. Catalyzes the reversible phosphorylation of UMP to UDP. The protein is Uridylate kinase of Pseudoalteromonas translucida (strain TAC 125).